We begin with the raw amino-acid sequence, 485 residues long: UDP-N-acetylmuramate--L-alanine ligase (485 aa).

Residue 120–126 (GSHGKTT) coordinates ATP.

This sequence belongs to the MurCDEF family.

It localises to the cytoplasm. The catalysed reaction is UDP-N-acetyl-alpha-D-muramate + L-alanine + ATP = UDP-N-acetyl-alpha-D-muramoyl-L-alanine + ADP + phosphate + H(+). Its pathway is cell wall biogenesis; peptidoglycan biosynthesis. In terms of biological role, cell wall formation. In Rickettsia africae (strain ESF-5), this protein is UDP-N-acetylmuramate--L-alanine ligase.